The primary structure comprises 156 residues: Cyanate hydratase (156 aa).

Catalysis depends on residues arginine 96, glutamate 99, and serine 122.

Belongs to the cyanase family.

The catalysed reaction is cyanate + hydrogencarbonate + 3 H(+) = NH4(+) + 2 CO2. In terms of biological role, catalyzes the reaction of cyanate with bicarbonate to produce ammonia and carbon dioxide. This Escherichia coli (strain K12 / DH10B) protein is Cyanate hydratase.